Consider the following 450-residue polypeptide: MSGHGTPIPMTSRRASPLKGEAHVPGDKSISHRSLILGAMAVGETKISGLLEGEDVLDTAKAMQAFGAEVVNHGGGEWSVFGVGVGGFAEPENVIDCGNSGTGVRLIMGAMATSPITATFTGDASLNKRPMARVTDPLALFGAQSVGREGGRLPMTIVGAAEPVPVRYEVPVPSAQVKSAVLLAGLNAPGKTVVIEREATRDHSERMLAGFGAEITVEDTKEGRVITLTGQPELKPQVIAVPRDPSSAAFPVCAALITPGSDVLVPGIGLNPTRAGLFYTLQDMGADLTFENPRTEGGEPVADLRAKYSPDMKGIEVPPERAASMIDEYPVLSVVASFATGTTMMAGVKELRVKESDRIDAMAKGLRANGVTVEEGEDWWSVEGCGPEGVKGGGTAESFLDHRIAMSFMVMGMGAQNPVSVDDGSPIATSFPIFERLMGDLGASIIRTDG.

Positions 1–26 (MSGHGTPIPMTSRRASPLKGEAHVPG) are disordered. Residues Lys-28, Ser-29, and Arg-33 each coordinate 3-phosphoshikimate. Lys-28 is a phosphoenolpyruvate binding site. Phosphoenolpyruvate-binding residues include Gly-101 and Arg-129. Residues Ser-174, Gln-176, Asp-327, and Lys-354 each coordinate 3-phosphoshikimate. Position 176 (Gln-176) interacts with phosphoenolpyruvate. Asp-327 (proton acceptor) is an active-site residue. The phosphoenolpyruvate site is built by Arg-358 and Arg-403.

It belongs to the EPSP synthase family. Monomer.

It localises to the cytoplasm. The catalysed reaction is 3-phosphoshikimate + phosphoenolpyruvate = 5-O-(1-carboxyvinyl)-3-phosphoshikimate + phosphate. Its pathway is metabolic intermediate biosynthesis; chorismate biosynthesis; chorismate from D-erythrose 4-phosphate and phosphoenolpyruvate: step 6/7. In terms of biological role, catalyzes the transfer of the enolpyruvyl moiety of phosphoenolpyruvate (PEP) to the 5-hydroxyl of shikimate-3-phosphate (S3P) to produce enolpyruvyl shikimate-3-phosphate and inorganic phosphate. The protein is 3-phosphoshikimate 1-carboxyvinyltransferase of Ruegeria sp. (strain TM1040) (Silicibacter sp.).